The chain runs to 711 residues: DNA topoisomerase 3 (711 aa).

Residues 2–135 (KSLILAEKPS…LRRLWISSVT (134 aa)) form the Toprim domain. Residues Glu-8 and Asp-104 each coordinate Mg(2+). A Topo IA-type catalytic domain is found at 152–580 (YNDLYYAALA…EMKDFTKDVV (429 aa)). Residues 186-191 (SLGRVQ) form an interaction with DNA region. The active-site O-(5'-phospho-DNA)-tyrosine intermediate is Tyr-305. Residues 691–711 (MNKNEGLDNNPFKDALKNLNL) are disordered.

This sequence belongs to the type IA topoisomerase family. Mg(2+) is required as a cofactor.

It catalyses the reaction ATP-independent breakage of single-stranded DNA, followed by passage and rejoining.. In terms of biological role, releases the supercoiling and torsional tension of DNA, which is introduced during the DNA replication and transcription, by transiently cleaving and rejoining one strand of the DNA duplex. Introduces a single-strand break via transesterification at a target site in duplex DNA. The scissile phosphodiester is attacked by the catalytic tyrosine of the enzyme, resulting in the formation of a DNA-(5'-phosphotyrosyl)-enzyme intermediate and the expulsion of a 3'-OH DNA strand. The free DNA strand then undergoes passage around the unbroken strand, thus removing DNA supercoils. Finally, in the religation step, the DNA 3'-OH attacks the covalent intermediate to expel the active-site tyrosine and restore the DNA phosphodiester backbone. The protein is DNA topoisomerase 3 of Staphylococcus aureus (strain MRSA252).